The following is a 263-amino-acid chain: Shikimate dehydrogenase (NADP(+)) (263 aa).

Residues 16 to 18 (SKS) and Thr65 contribute to the shikimate site. Lys69 (proton acceptor) is an active-site residue. Shikimate-binding residues include Asn90 and Asp105. Residues 125-129 (GSGGS) and Leu208 contribute to the NADP(+) site. Residue Tyr210 coordinates shikimate. Position 230 (Gly230) interacts with NADP(+).

The protein belongs to the shikimate dehydrogenase family. As to quaternary structure, homodimer.

It catalyses the reaction shikimate + NADP(+) = 3-dehydroshikimate + NADPH + H(+). It participates in metabolic intermediate biosynthesis; chorismate biosynthesis; chorismate from D-erythrose 4-phosphate and phosphoenolpyruvate: step 4/7. Functionally, involved in the biosynthesis of the chorismate, which leads to the biosynthesis of aromatic amino acids. Catalyzes the reversible NADPH linked reduction of 3-dehydroshikimate (DHSA) to yield shikimate (SA). The chain is Shikimate dehydrogenase (NADP(+)) from Helicobacter pylori (strain G27).